The following is a 177-amino-acid chain: Thymidine kinase (177 aa).

11–18 (GPMLSGKS) lines the ATP pocket. The active-site Proton acceptor is the Glu-83. Position 113 (Phe-113) interacts with substrate. The Zn(2+) site is built by Cys-138 and Cys-141. Residue 157 to 161 (IEIIG) coordinates substrate. Positions 170 and 173 each coordinate Zn(2+).

It belongs to the thymidine kinase family. Homotetramer. Two molecules of substrate bind to each enzyme tetramer.

It carries out the reaction thymidine + ATP = dTMP + ADP + H(+). Its function is as follows. Phosphorylates thymidine and thymidine analogs, such as azidothymidine (AZT). Part of the salvage pathway for pyrimidine deoxyribonucleotide synthesis. The protein is Thymidine kinase (OPG101) of Monkeypox virus (strain Zaire-96-I-16) (MPX).